Here is a 585-residue protein sequence, read N- to C-terminus: QTTEILLCLSPVEVANLKEGINFFRNKSTGKDYILYKNKSRLRACKNMCKHQGGLFIKDIEDLAGRSVRCTKHNWKLDVSTMKYINPPESFCQDELVVEMDENNRLLLLELNPPNPWDLQPRSPEELAFGEVQITYLTHACMDLKLGDKRMVFDPWLIGPAFARGWWLLHEPPSDWLERLCQADLIYISHLHSDHLSYPTLKKLAGRRPDIPIYVGNTERPVFWNLNQSGVQLTNINIVPFGIWQQVDKNLRFMILMDGVHPEMDTCIIVEYKGHKILNTVDCTRPNGGRLPMKVALMMSDFAGGASGFPMTFSGGKFTEEWKAQFIKTERKKLLNYKAQLVKNLQPRIYCPFAGYFVESHPSDKYIKETNTKNDPNELNNLIKKNSDVITWTPRPGATLDLARMLKDPTDSKGIVEPPEGTKIYKDSWDFEPYLEILNAAVGDEIFLHSSWIKEYFTWAGFKDYNLVVRMIETDEDFNPFPGGYDYLVDFLDLSFPKERPQREHPYEEIHSRVDVIRHVVKNGLLWDELYIGFQTRLQRDPDIYHHLFWNHFQIKLPLMPPNWKSFLMCCEQNEPGILQECTTT.

One can recognise a Rieske domain in the interval 9–107; that stretch reads LSPVEVANLK…VEMDENNRLL (99 aa). Residues Cys49, His51, Cys70, and His73 each contribute to the [2Fe-2S] cluster site.

Belongs to the CMP-Neu5Ac hydroxylase family. It depends on [2Fe-2S] cluster as a cofactor.

It is found in the cytoplasm. It carries out the reaction CMP-N-acetyl-beta-neuraminate + 2 Fe(II)-[cytochrome b5] + O2 + 2 H(+) = CMP-N-glycoloyl-beta-neuraminate + 2 Fe(III)-[cytochrome b5] + H2O. It participates in amino-sugar metabolism; N-acetylneuraminate metabolism. Sialic acids are components of carbohydrate chains of glycoconjugates and are involved in cell-cell recognition and cell-pathogen interactions. Catalyzes the conversion of CMP-N-acetylneuraminic acid (CMP-Neu5Ac) into its hydroxylated derivative CMP-N-glycolylneuraminic acid (CMP-Neu5Gc), a sialic acid abundantly expressed at the surface of many cells. The protein is Cytidine monophosphate-N-acetylneuraminic acid hydroxylase (CMAH) of Pongo pygmaeus (Bornean orangutan).